Consider the following 107-residue polypeptide: UPF0145 protein Sfri_2095 (107 aa).

Belongs to the UPF0145 family.

The chain is UPF0145 protein Sfri_2095 from Shewanella frigidimarina (strain NCIMB 400).